The primary structure comprises 588 residues: Protein kinase C iota type (588 aa).

Residues 18–101 form the PB1 domain; the sequence is QVRVKAYYRG…SELIIHVFPC (84 aa). A Phorbol-ester/DAG-type zinc finger spans residues 133 to 183; sequence GHAFQAKRFNRRAHCAICTDRIWGLGRQGYKCINCKLLVHKKCHKLVTVEC. A disordered region spans residues 194–213; that stretch reads GRIDPGSTHPEHPDQVLGKK. Positions 246–514 constitute a Protein kinase domain; that stretch reads FDLLRVIGRG…FADIMAHPFF (269 aa). ATP-binding positions include 252–260 and Lys275; that span reads IGRGSYAKV. Asp370 serves as the catalytic Proton acceptor. 2 positions are modified to phosphothreonine: Thr404 and Thr556. Residues 515–586 enclose the AGC-kinase C-terminal domain; the sequence is RNVDWDLMEQ…INPLLMSAEE (72 aa).

It belongs to the protein kinase superfamily. AGC Ser/Thr protein kinase family. PKC subfamily.

The enzyme catalyses L-seryl-[protein] + ATP = O-phospho-L-seryl-[protein] + ADP + H(+). It carries out the reaction L-threonyl-[protein] + ATP = O-phospho-L-threonyl-[protein] + ADP + H(+). Exhibits an elevated basal enzymatic activity and is not regulated by diacylglycerol, phosphatidylserine, phorbol esters or calcium ions. Two specific sites, Thr-404 (activation loop of the kinase domain) and Thr-556 (turn motif), need to be phosphorylated for its full activation. Functionally, calcium- and diacylglycerol-independent serine/ threonine-protein kinase that plays a general protective role against apoptotic stimuli, is involved in NF-kappa-B activation, cell survival, differentiation and polarity, and contributes to the regulation of microtubule dynamics in the early secretory pathway. Is required for the formation and maintenance of the zonula adherens during early epithelial development and plays a critical role in organ morphogenesis and in regulating the orientation of cell division. Required for polarized epithelial organization, myocardium coherence and cell connectivity in the early somite stages. Required for heart cone tilt and development of circulatory architecture during embryogenesis. This Danio rerio (Zebrafish) protein is Protein kinase C iota type (prkci).